The sequence spans 396 residues: Tryptophan synthase beta chain (396 aa).

Position 88 is an N6-(pyridoxal phosphate)lysine (lysine 88).

It belongs to the TrpB family. In terms of assembly, tetramer of two alpha and two beta chains. Pyridoxal 5'-phosphate serves as cofactor.

The catalysed reaction is (1S,2R)-1-C-(indol-3-yl)glycerol 3-phosphate + L-serine = D-glyceraldehyde 3-phosphate + L-tryptophan + H2O. Its pathway is amino-acid biosynthesis; L-tryptophan biosynthesis; L-tryptophan from chorismate: step 5/5. In terms of biological role, the beta subunit is responsible for the synthesis of L-tryptophan from indole and L-serine. In Shewanella putrefaciens (strain CN-32 / ATCC BAA-453), this protein is Tryptophan synthase beta chain.